The sequence spans 330 residues: ADP-L-glycero-D-manno-heptose-6-epimerase (330 aa).

Residues 11 to 12, 32 to 33, Lys39, Lys54, 75 to 79, and Asn92 contribute to the NADP(+) site; these read FI, DN, and EGACS. The active-site Proton acceptor is Tyr139. Residue Lys143 participates in NADP(+) binding. A substrate-binding site is contributed by Asn168. The NADP(+) site is built by Val169 and Lys177. The Proton acceptor role is filled by Lys177. Substrate is bound by residues Arg179, His186, 200–203, Arg213, and Tyr292; that span reads FGEY.

Belongs to the NAD(P)-dependent epimerase/dehydratase family. HldD subfamily. As to quaternary structure, homopentamer. NADP(+) is required as a cofactor.

It carries out the reaction ADP-D-glycero-beta-D-manno-heptose = ADP-L-glycero-beta-D-manno-heptose. The protein operates within nucleotide-sugar biosynthesis; ADP-L-glycero-beta-D-manno-heptose biosynthesis; ADP-L-glycero-beta-D-manno-heptose from D-glycero-beta-D-manno-heptose 7-phosphate: step 4/4. Catalyzes the interconversion between ADP-D-glycero-beta-D-manno-heptose and ADP-L-glycero-beta-D-manno-heptose via an epimerization at carbon 6 of the heptose. This is ADP-L-glycero-D-manno-heptose-6-epimerase from Burkholderia ambifaria (strain MC40-6).